The following is a 596-amino-acid chain: Beta-fructofuranosidase, insoluble isoenzyme 7 (596 aa).

The N-terminal stretch at Met-1–Ser-24 is a signal peptide. Substrate-binding positions include Trp-51–Asp-54, Gln-70, and Trp-78. Residue Asp-54 is part of the active site. Residue Asn-82 is glycosylated (N-linked (GlcNAc...) asparagine). Substrate-binding positions include Trp-115–Ser-116, Arg-179–Asp-180, and Glu-234. Residue Asn-330 is glycosylated (N-linked (GlcNAc...) asparagine). A disulfide bridge links Cys-432 with Cys-478. N-linked (GlcNAc...) asparagine glycosylation is present at Asn-552.

Belongs to the glycosyl hydrolase 32 family. In terms of tissue distribution, expressed in roots, leaves and flowers. Weakly expressed in seeds.

The protein resides in the secreted. Its subcellular location is the extracellular space. It localises to the apoplast. The protein localises to the cell wall. The catalysed reaction is Hydrolysis of terminal non-reducing beta-D-fructofuranoside residues in beta-D-fructofuranosides.. In terms of biological role, may play a role in sucrose partitioning during seed development. In Oryza sativa subsp. japonica (Rice), this protein is Beta-fructofuranosidase, insoluble isoenzyme 7 (CIN7).